The sequence spans 536 residues: Trigger factor (536 aa).

Residues 164 to 249 (GDQVIIDFAG…VKEVKVPAAT (86 aa)) form the PPIase FKBP-type domain. The interval 439-536 (IEADDDSGHV…APAKKAAAKK (98 aa)) is disordered. A compositionally biased stretch (basic and acidic residues) spans 472-502 (TKKEAVKDEAKAEEAPAKKAPAKKAEPKAEA). The span at 503–515 (KPAAAKKAAPAKA) shows a compositional bias: low complexity. The span at 516 to 525 (AAEEKAEPAK) shows a compositional bias: basic and acidic residues. A compositionally biased stretch (basic residues) spans 527–536 (APAKKAAAKK).

The protein belongs to the FKBP-type PPIase family. Tig subfamily.

The protein resides in the cytoplasm. The enzyme catalyses [protein]-peptidylproline (omega=180) = [protein]-peptidylproline (omega=0). Involved in protein export. Acts as a chaperone by maintaining the newly synthesized protein in an open conformation. Functions as a peptidyl-prolyl cis-trans isomerase. In Sphingopyxis alaskensis (strain DSM 13593 / LMG 18877 / RB2256) (Sphingomonas alaskensis), this protein is Trigger factor.